Here is a 252-residue protein sequence, read N- to C-terminus: E3 ubiquitin-protein ligase MARCHF3 (252 aa).

Residues 62–122 form an RING-CH-type zinc finger; that stretch reads SSFNDHPMCR…ELCHFRFSVE (61 aa). Cys-70, Cys-73, Cys-86, Cys-88, His-96, Cys-99, Cys-112, and Cys-115 together coordinate Zn(2+). Transmembrane regions (helical) follow at residues 144-164 and 181-201; these read LFGD…SGWL and AVGL…WTLV.

The protein resides in the cytoplasmic vesicle membrane. Its subcellular location is the early endosome membrane. The enzyme catalyses S-ubiquitinyl-[E2 ubiquitin-conjugating enzyme]-L-cysteine + [acceptor protein]-L-lysine = [E2 ubiquitin-conjugating enzyme]-L-cysteine + N(6)-ubiquitinyl-[acceptor protein]-L-lysine.. It participates in protein modification; protein ubiquitination. Functionally, E3 ubiquitin-protein ligase which may be involved in endosomal trafficking. E3 ubiquitin ligases accept ubiquitin from an E2 ubiquitin-conjugating enzyme in the form of a thioester and then directly transfer the ubiquitin to targeted substrates. This chain is E3 ubiquitin-protein ligase MARCHF3 (marchf3), found in Xenopus laevis (African clawed frog).